The sequence spans 110 residues: Large ribosomal subunit protein uL22 (110 aa).

Residues 84–95 (ARGTASKIRKPT) are compositionally biased toward basic residues. Residues 84–110 (ARGTASKIRKPTSHVMVEVSKPEKKEA) form a disordered region.

It belongs to the universal ribosomal protein uL22 family. Part of the 50S ribosomal subunit.

This protein binds specifically to 23S rRNA; its binding is stimulated by other ribosomal proteins, e.g. L4, L17, and L20. It is important during the early stages of 50S assembly. It makes multiple contacts with different domains of the 23S rRNA in the assembled 50S subunit and ribosome. In terms of biological role, the globular domain of the protein is located near the polypeptide exit tunnel on the outside of the subunit, while an extended beta-hairpin is found that lines the wall of the exit tunnel in the center of the 70S ribosome. This is Large ribosomal subunit protein uL22 from Campylobacter concisus (strain 13826).